A 271-amino-acid chain; its full sequence is TIP41-like protein (271 aa).

An N6-acetyllysine modification is found at Lys106. The interval 173–271 is interaction with PPP2CA; the sequence is RVMPSSFFLL…PVDSQSTPSE (99 aa). 2 positions are modified to phosphoserine: Ser265 and Ser270.

It belongs to the TIP41 family. As to quaternary structure, interacts with PPP2CA. Interacts with PPP2CB, PPP4C and PPP6C. Interacts with IGBP1; the interaction is dependent on PPP2CA. Associates with a protein phosphatase 2A PP2A(C):IGBP1 complex. Interacts with PPP4C and PPP4R2.

The protein localises to the cytoplasm. May be a allosteric regulator of serine/threonine-protein phosphatase 2A (PP2A). Inhibits catalytic activity of the PP2A(D) core complex in vitro. The PP2A(C):TIPRL complex does not show phosphatase activity. Acts as a negative regulator of serine/threonine-protein phosphatase 4 probably by inhibiting the formation of the active PPP4C:PPP4R2 complex; the function is proposed to implicate it in DNA damage response by promoting H2AX phosphorylated on Ser-140 (gamma-H2AX). May play a role in the regulation of ATM/ATR signaling pathway controlling DNA replication and repair. This chain is TIP41-like protein (Tiprl), found in Mus musculus (Mouse).